We begin with the raw amino-acid sequence, 162 residues long: F protein (162 aa).

Residues 1-23 are disordered; sequence MSTNPKPQRKKPNVTPTVAHRTS. The segment covering 14–23 has biased composition (polar residues); the sequence is VTPTVAHRTS.

The protein resides in the host cytoplasm. It localises to the host perinuclear region. Functionally, contributes to the RIGI-mediated inhibition of type I interferon production. This Homo sapiens (Human) protein is F protein.